The chain runs to 576 residues: Arginine--tRNA ligase (576 aa).

Positions 122–132 (PNVAKEMHVGH) match the 'HIGH' region motif.

Belongs to the class-I aminoacyl-tRNA synthetase family. Monomer.

The protein resides in the cytoplasm. It carries out the reaction tRNA(Arg) + L-arginine + ATP = L-arginyl-tRNA(Arg) + AMP + diphosphate. The sequence is that of Arginine--tRNA ligase from Sodalis glossinidius (strain morsitans).